A 252-amino-acid chain; its full sequence is Chitooligosaccharide deacetylase (252 aa).

2 residues coordinate Mg(2+): histidine 61 and histidine 125.

The protein belongs to the YdjC deacetylase family. ChbG subfamily. In terms of assembly, homodimer. Requires Mg(2+) as cofactor.

It localises to the cytoplasm. It catalyses the reaction N,N'-diacetylchitobiose + H2O = N-acetyl-beta-D-glucosaminyl-(1-&gt;4)-D-glucosamine + acetate. The enzyme catalyses diacetylchitobiose-6'-phosphate + H2O = N'-monoacetylchitobiose-6'-phosphate + acetate. It functions in the pathway glycan degradation; chitin degradation. Functionally, involved in the degradation of chitin. ChbG is essential for growth on the acetylated chitooligosaccharides chitobiose and chitotriose but is dispensable for growth on cellobiose and chitosan dimer, the deacetylated form of chitobiose. Deacetylation of chitobiose-6-P and chitotriose-6-P is necessary for both the activation of the chb promoter by the regulatory protein ChbR and the hydrolysis of phosphorylated beta-glucosides by the phospho-beta-glucosidase ChbF. Catalyzes the removal of only one acetyl group from chitobiose-6-P to yield monoacetylchitobiose-6-P, the inducer of ChbR and the substrate of ChbF. The sequence is that of Chitooligosaccharide deacetylase from Escherichia coli O8 (strain IAI1).